A 138-amino-acid chain; its full sequence is Putative pre-16S rRNA nuclease (138 aa).

The protein belongs to the YqgF nuclease family.

It is found in the cytoplasm. Could be a nuclease involved in processing of the 5'-end of pre-16S rRNA. In Klebsiella pneumoniae subsp. pneumoniae (strain ATCC 700721 / MGH 78578), this protein is Putative pre-16S rRNA nuclease.